The primary structure comprises 138 residues: Large ribosomal subunit protein uL16 (138 aa).

It belongs to the universal ribosomal protein uL16 family. In terms of assembly, part of the 50S ribosomal subunit.

Binds 23S rRNA and is also seen to make contacts with the A and possibly P site tRNAs. The sequence is that of Large ribosomal subunit protein uL16 from Paramagnetospirillum magneticum (strain ATCC 700264 / AMB-1) (Magnetospirillum magneticum).